The primary structure comprises 833 residues: Leucine--tRNA ligase (833 aa).

A 'HIGH' region motif is present at residues 41 to 52 (PYPSGAGLHVGH). The 'KMSKS' region signature appears at 610-614 (KMSKS). Lysine 613 contributes to the ATP binding site.

It belongs to the class-I aminoacyl-tRNA synthetase family.

It is found in the cytoplasm. It carries out the reaction tRNA(Leu) + L-leucine + ATP = L-leucyl-tRNA(Leu) + AMP + diphosphate. This is Leucine--tRNA ligase from Streptococcus pneumoniae (strain ATCC 700669 / Spain 23F-1).